Reading from the N-terminus, the 193-residue chain is Translocation protein SEC72 (193 aa).

In terms of assembly, component of the heterotetrameric Sec62/63complex composed of SEC62, SEC63, SEC71 and SEC72. The Sec62/63 complex associates with the Sec61 complex to form the Sec complex. May interact with protein YLR301W. Part of a complex consisting of KAR2, SEC63, SEC66 and SEC72.

It localises to the cytoplasm. Functionally, acts as a non-essential component of the Sec62/63 complex which is involved in SRP-independent post-translational translocation across the endoplasmic reticulum (ER) and functions together with the Sec61 complex and KAR2 in a channel-forming translocon complex. A cycle of assembly and disassembly of Sec62/63 complex from SEC61 may govern the activity of the translocon. SEC72 may be involved in signal peptide recognition for a defined subset of leader peptides, or may increase the efficiency of unusual or 'difficult' secretory precursors to the translocation pore, it may be that this protein binds charged leader peptides to the membrane until they engage the translocation apparatus. The chain is Translocation protein SEC72 (SEC72) from Saccharomyces cerevisiae (strain ATCC 204508 / S288c) (Baker's yeast).